Here is a 396-residue protein sequence, read N- to C-terminus: MPPKKGGDGIKPPPIIGRFGTSLKIGIVGLPNVGKSTFFNVLTNSQASAENFPFCTIDPNESRVPVPDERFDFLCQYHKPASKIPAFLNVVDIAGLVKGAHNGQGLGNAFLSHISACDGIFHLTRAFEDDDITHVEGSVDPVRDIEIIHEELQLKDEEMVGPIIDKLEKVAVRGGDKKLKPEYDIMCKVKSWVIDQKKPVRFYHDWNDKEIEVLNKHLFLTSKPMVYLVNLSEKDYIRKKNKWLIKIKEWVDKYDPGALVIPFSGALELRLQELSAEERQKYLEANMTQSALPKIIKAGFAALQLEYFFTAGPDEVRAWTIRKGTKAPQAAGKIHTDFEKGFIMAEVMKYEDFKEEGSENAVKAAGKYRQQGRNYIVEDGDIIFFKFNTPQQPKKK.

The region spanning 23-283 (LKIGIVGLPN…LSAEERQKYL (261 aa)) is the OBG-type G domain. 32–37 (NVGKST) contacts ATP. Mg(2+) contacts are provided by Ser36 and Thr56. Leu231 contacts ATP. Residues 267-274 (LELRLQEL) carry the Nuclear export signal motif. Lys294 bears the N6-acetyllysine mark. Positions 304–387 (QLEYFFTAGP…EDGDIIFFKF (84 aa)) constitute a TGS domain.

The protein belongs to the TRAFAC class OBG-HflX-like GTPase superfamily. OBG GTPase family. YchF/OLA1 subfamily. In terms of assembly, monomer. Mg(2+) is required as a cofactor.

It localises to the cytoplasm. Its subcellular location is the nucleus. The protein resides in the nucleolus. Its function is as follows. Hydrolyzes ATP, and can also hydrolyze GTP with lower efficiency. Has lower affinity for GTP. This is Obg-like ATPase 1 from Bos taurus (Bovine).